A 549-amino-acid chain; its full sequence is Glucose-6-phosphate isomerase (549 aa).

E355 functions as the Proton donor in the catalytic mechanism. Residues H386 and K514 contribute to the active site.

Belongs to the GPI family.

It localises to the cytoplasm. It catalyses the reaction alpha-D-glucose 6-phosphate = beta-D-fructose 6-phosphate. Its pathway is carbohydrate biosynthesis; gluconeogenesis. The protein operates within carbohydrate degradation; glycolysis; D-glyceraldehyde 3-phosphate and glycerone phosphate from D-glucose: step 2/4. Its function is as follows. Catalyzes the reversible isomerization of glucose-6-phosphate to fructose-6-phosphate. This chain is Glucose-6-phosphate isomerase, found in Desulfatibacillum aliphaticivorans.